An 80-amino-acid polypeptide reads, in one-letter code: Large ribosomal subunit protein bL31B (80 aa).

Belongs to the bacterial ribosomal protein bL31 family. Type B subfamily. Part of the 50S ribosomal subunit.

This chain is Large ribosomal subunit protein bL31B, found in Shouchella clausii (strain KSM-K16) (Alkalihalobacillus clausii).